A 104-amino-acid chain; its full sequence is Large ribosomal subunit protein bL21 (104 aa).

It belongs to the bacterial ribosomal protein bL21 family. Part of the 50S ribosomal subunit. Contacts protein L20.

Functionally, this protein binds to 23S rRNA in the presence of protein L20. This is Large ribosomal subunit protein bL21 from Streptococcus mutans serotype c (strain ATCC 700610 / UA159).